The sequence spans 554 residues: Malate synthase 1 (554 aa).

Catalysis depends on arginine 177, which acts as the Proton acceptor. Catalysis depends on aspartate 457, which acts as the Proton donor. The SKL peroxisome targeting motif motif lies at 552-554; sequence SKL.

It belongs to the malate synthase family. As to quaternary structure, interacts with PEX9.

It localises to the peroxisome matrix. It carries out the reaction glyoxylate + acetyl-CoA + H2O = (S)-malate + CoA + H(+). It participates in carbohydrate metabolism; glyoxylate cycle; (S)-malate from isocitrate: step 2/2. In terms of biological role, malate synthase which takes part in the glyoxylate cycle. MLS1 activity is essential for cells to grow on oleic acid as a sole carbon source. Two steps of the glyoxylate cycle take place in the cytosol, the splitting of isocitrate into succinate and glyoxylate, and the dehydrogenation of malate to oxaloacetate. However, the formation of malate from glyoxylate and acetyl-CoA undertaken MLS1, occurs in the peroxisomes when cells are grown on oleic acid. The source of acetyl-CoA being either peroxisomal when breaking down fatty acids, or cytosolic when extra-cellular two-carbon substrates are used, therefore, although not strictly essential, the peroxisomal localization of MLS1 appears to be advantageous for cells growing on oleic acid, in that acetyl-CoA production and utilization are thereby intimately compartmentalized together to increase efficiency. The polypeptide is Malate synthase 1 (Saccharomyces cerevisiae (strain YJM789) (Baker's yeast)).